Consider the following 202-residue polypeptide: LexA repressor (202 aa).

The segment at residues 28 to 48 is a DNA-binding region (H-T-H motif); the sequence is RAEIAQRLGFRSPNAAEEHLK. Residues Ser119 and Lys156 each act as for autocatalytic cleavage activity in the active site.

Belongs to the peptidase S24 family. Homodimer.

The enzyme catalyses Hydrolysis of Ala-|-Gly bond in repressor LexA.. Its function is as follows. Represses a number of genes involved in the response to DNA damage (SOS response), including recA and lexA. Binds to the 16 bp palindromic sequence 5'-CTGTATATATATACAG-3'. In the presence of single-stranded DNA, RecA interacts with LexA causing an autocatalytic cleavage which disrupts the DNA-binding part of LexA, leading to derepression of the SOS regulon and eventually DNA repair. The protein is LexA repressor of Klebsiella pneumoniae subsp. pneumoniae (strain ATCC 700721 / MGH 78578).